A 239-amino-acid polypeptide reads, in one-letter code: Purine nucleoside phosphorylase DeoD-type (239 aa).

His-5 contributes to the a purine D-ribonucleoside binding site. Residues Gly-21, Arg-25, Arg-44, and 88–91 each bind phosphate; that span reads RVGS. A purine D-ribonucleoside is bound by residues 180-182 and 204-205; these read EME and SD. The Proton donor role is filled by Asp-205.

It belongs to the PNP/UDP phosphorylase family. Homohexamer; trimer of homodimers.

The enzyme catalyses a purine D-ribonucleoside + phosphate = a purine nucleobase + alpha-D-ribose 1-phosphate. It catalyses the reaction a purine 2'-deoxy-D-ribonucleoside + phosphate = a purine nucleobase + 2-deoxy-alpha-D-ribose 1-phosphate. Functionally, catalyzes the reversible phosphorolytic breakdown of the N-glycosidic bond in the beta-(deoxy)ribonucleoside molecules, with the formation of the corresponding free purine bases and pentose-1-phosphate. In Yersinia pestis bv. Antiqua (strain Antiqua), this protein is Purine nucleoside phosphorylase DeoD-type.